Here is a 347-residue protein sequence, read N- to C-terminus: DNA-directed RNA polymerase subunit alpha (347 aa).

Residues 1–226 (MLISQRPTLS…ELFGLARELN (226 aa)) form an alpha N-terminal domain (alpha-NTD) region. The interval 241–347 (ADHIASFALP…DQDYAETEQL (107 aa)) is alpha C-terminal domain (alpha-CTD).

It belongs to the RNA polymerase alpha chain family. Homodimer. The RNAP catalytic core consists of 2 alpha, 1 beta, 1 beta' and 1 omega subunit. When a sigma factor is associated with the core the holoenzyme is formed, which can initiate transcription.

It carries out the reaction RNA(n) + a ribonucleoside 5'-triphosphate = RNA(n+1) + diphosphate. In terms of biological role, DNA-dependent RNA polymerase catalyzes the transcription of DNA into RNA using the four ribonucleoside triphosphates as substrates. The sequence is that of DNA-directed RNA polymerase subunit alpha from Mycobacterium ulcerans (strain Agy99).